Here is a 557-residue protein sequence, read N- to C-terminus: Ubiquitin C-terminal hydrolase 22 (557 aa).

Residues 36-130 form a UBP-type; degenerate zinc finger; it reads FRCFNDARIK…VSKQLFGLGM (95 aa). The Zn(2+) site is built by cysteine 56, cysteine 59, cysteine 69, cysteine 72, cysteine 77, histidine 80, histidine 84, and histidine 91. Positions 177-531 constitute a USP domain; sequence RGLNNLGSTC…ECYMLFYAQE (355 aa). Cysteine 186 (nucleophile) is an active-site residue. Catalysis depends on histidine 491, which acts as the Proton acceptor.

This sequence belongs to the peptidase C19 family. Component of a deubiquitination module (DUB module) formed by ENY2, SGF11, and UBP22 in Arabidopsis. Interacts directly with SGF11, but not with ENY2.

It localises to the nucleus. It is found in the nucleoplasm. It carries out the reaction Thiol-dependent hydrolysis of ester, thioester, amide, peptide and isopeptide bonds formed by the C-terminal Gly of ubiquitin (a 76-residue protein attached to proteins as an intracellular targeting signal).. Its function is as follows. Component of a deubiquitination module (DUB module) that specifically deubiquinates monoubiquinated histone H2B (H2Bub). Does not seem to be a component of the TREX-2 complex. Seems to act independently of the SAGA multiprotein complex. The DUB module is responsible for the major H2Bub deubiquitinase activity in Arabidopsis. The chain is Ubiquitin C-terminal hydrolase 22 from Arabidopsis thaliana (Mouse-ear cress).